We begin with the raw amino-acid sequence, 453 residues long: uncharacterized protein (453 aa).

One can recognise a TRAM domain in the interval 5–63 (LLKKNQSIELTIEDLTHDGSGVGKIDGYPLFIPNTLPGEKVTAKIIKLNKNYGFARMEN). Positions 76, 82, 85, and 162 each coordinate [4Fe-4S] cluster. S-adenosyl-L-methionine is bound by residues glutamine 285, tyrosine 314, glutamate 335, and aspartate 383. The Nucleophile role is filled by cysteine 410.

Belongs to the class I-like SAM-binding methyltransferase superfamily. RNA M5U methyltransferase family.

This is an uncharacterized protein from Listeria monocytogenes serotype 4b (strain F2365).